The chain runs to 357 residues: Peptide chain release factor 1 (357 aa).

An N5-methylglutamine modification is found at glutamine 234. Basic and acidic residues predominate over residues 284–307; the sequence is KKQEQRSNDRKQQVGSGDRSERIR. The tract at residues 284 to 313 is disordered; that stretch reads KKQEQRSNDRKQQVGSGDRSERIRTYNFPQ.

Belongs to the prokaryotic/mitochondrial release factor family. Methylated by PrmC. Methylation increases the termination efficiency of RF1.

The protein localises to the cytoplasm. In terms of biological role, peptide chain release factor 1 directs the termination of translation in response to the peptide chain termination codons UAG and UAA. The protein is Peptide chain release factor 1 of Borrelia turicatae (strain 91E135).